The sequence spans 200 residues: Putative TLC domain-containing protein L438 (200 aa).

The 193-residue stretch at 1–193 (MDYKQSNLFL…ILKILRAKLF (193 aa)) folds into the TLC domain. The next 6 helical transmembrane spans lie at 9–29 (FLFP…CGTF), 43–63 (THGI…LMIV), 74–94 (VHHF…YYLI), 96–116 (YLFA…AIKY), 131–151 (LAFF…LWFV), and 165–185 (YLIV…YRIL).

Its subcellular location is the membrane. This Acanthamoeba polyphaga mimivirus (APMV) protein is Putative TLC domain-containing protein L438.